Consider the following 342-residue polypeptide: Protein BASIC PENTACYSTEINE6 (342 aa).

The stretch at 41 to 67 (AIQERNLAISEKKAAVAERDMAFLQRD) forms a coiled coil. Positions 41-76 (AIQERNLAISEKKAAVAERDMAFLQRDTAIAERNNA) are alanine-zipper. The interval 143–199 (REMEPNDGLPTSPPAGSTLESAKPKRGKRVNPKATTQTAANKRGPKNQRKVKKESED) is disordered. The interval 164–195 (AKPKRGKRVNPKATTQTAANKRGPKNQRKVKK) is required for nucleus and nucleolus localization. Residues 185 to 194 (RGPKNQRKVK) are compositionally biased toward basic residues. Residues 192-195 (KVKK) carry the Nuclear localization signal motif.

The protein belongs to the BBR/BPC family. In terms of assembly, homodimer. Heterodimer with BPC4. As to expression, expressed in seedlings, leaves and pistils. Detected in the base of flowers and tips of carpels, in sepal vasculature, in young rosette, in the lateral and tip of primary roots, and in ovule at the exception of the outer integument.

It localises to the nucleus. It is found in the nucleolus. Transcriptional regulator that specifically binds to GA-rich elements (GAGA-repeats) present in regulatory sequences of genes involved in developmental processes. The polypeptide is Protein BASIC PENTACYSTEINE6 (BPC6) (Arabidopsis thaliana (Mouse-ear cress)).